The following is a 571-amino-acid chain: E3 ubiquitin-protein ligase ipaH3 (571 aa).

Residues 1 to 260 form an interaction with target proteins region; the sequence is MSIMLPINNN…SQQTAQPDYH (260 aa). LRR repeat units lie at residues 58 to 81, 83 to 99, 100 to 119, 120 to 144, 146 to 159, 160 to 184, 186 to 202, 205 to 229, and 232 to 260; these read INQF…LPPQ, TVLE…PELP, ASLE…PELP, ASLK…LLEY, NADN…PELP, TSLE…SLEA, DVST…PVRN, SEET…ILSL, and TCTI…PDYH. The linker stretch occupies residues 269 to 278; it reads SDGQQNTLHR. The 293-residue stretch at 279–571 folds into the NEL domain; that stretch reads PLADAVTAWF…SENGSQLHHS (293 aa). The E3 ubiquitin-protein ligase catalytic domain stretch occupies residues 279-571; sequence PLADAVTAWF…SENGSQLHHS (293 aa). Cys-363 functions as the Glycyl thioester intermediate in the catalytic mechanism.

This sequence belongs to the LRR-containing bacterial E3 ligase family. In terms of processing, ubiquitinated in the presence of host E1 ubiquitin-activating enzyme, E2 ubiquitin-conjugating enzyme UBE2D3 and ubiquitin.

The protein resides in the secreted. It localises to the host cytoplasm. The enzyme catalyses S-ubiquitinyl-[E2 ubiquitin-conjugating enzyme]-L-cysteine + [acceptor protein]-L-lysine = [E2 ubiquitin-conjugating enzyme]-L-cysteine + N(6)-ubiquitinyl-[acceptor protein]-L-lysine.. In terms of biological role, effector proteins function to alter host cell physiology and promote bacterial survival in host tissues. This protein is an E3 ubiquitin ligase that interferes with host's ubiquitination pathway. Synthesizes a 'Lys-48'-linked ubiquitin chain, which requires non-covalent binding between ubiquitin and the host ubiquitin-conjugating enzyme UBE2D1. The protein is E3 ubiquitin-protein ligase ipaH3 (ipaH3) of Shigella flexneri.